The chain runs to 438 residues: 23S rRNA (uracil(1939)-C(5))-methyltransferase RlmD (438 aa).

The TRAM domain maps to 10–69; the sequence is KASVNTKHLSVDVVRLDHNGAGIAFVDKKPVFIEGALPGEKAIIQFIEQKKQFSRAKLIK. 4 residues coordinate [4Fe-4S] cluster: cysteine 82, cysteine 88, cysteine 91, and cysteine 169. 6 residues coordinate S-adenosyl-L-methionine: glutamine 272, phenylalanine 301, asparagine 306, glutamate 322, asparagine 349, and aspartate 370. Cysteine 396 serves as the catalytic Nucleophile.

The protein belongs to the class I-like SAM-binding methyltransferase superfamily. RNA M5U methyltransferase family. RlmD subfamily.

The enzyme catalyses uridine(1939) in 23S rRNA + S-adenosyl-L-methionine = 5-methyluridine(1939) in 23S rRNA + S-adenosyl-L-homocysteine + H(+). Catalyzes the formation of 5-methyl-uridine at position 1939 (m5U1939) in 23S rRNA. The polypeptide is 23S rRNA (uracil(1939)-C(5))-methyltransferase RlmD (Aliivibrio fischeri (strain MJ11) (Vibrio fischeri)).